Here is a 451-residue protein sequence, read N- to C-terminus: Tubulin alpha chain (451 aa).

Gln-11 contributes to the GTP binding site. The residue at position 40 (Lys-40) is an N6-acetyllysine. Positions 71, 144, 145, 179, 206, and 228 each coordinate GTP. Glu-71 contacts Mg(2+). Glu-254 is a catalytic residue.

This sequence belongs to the tubulin family. Dimer of alpha and beta chains. A typical microtubule is a hollow water-filled tube with an outer diameter of 25 nm and an inner diameter of 15 nM. Alpha-beta heterodimers associate head-to-tail to form protofilaments running lengthwise along the microtubule wall with the beta-tubulin subunit facing the microtubule plus end conferring a structural polarity. Microtubules usually have 13 protofilaments but different protofilament numbers can be found in some organisms and specialized cells. Mg(2+) serves as cofactor. In terms of processing, undergoes a tyrosination/detyrosination cycle, the cyclic removal and re-addition of a C-terminal tyrosine residue by the enzymes tubulin tyrosine carboxypeptidase (TTCP) and tubulin tyrosine ligase (TTL), respectively. Post-translationally, acetylation of alpha chains at Lys-40 stabilizes microtubules and affects affinity and processivity of microtubule motors. This modification has a role in multiple cellular functions, ranging from cell motility, cell cycle progression or cell differentiation to intracellular trafficking and signaling.

Its subcellular location is the cytoplasm. The protein localises to the cytoskeleton. It carries out the reaction GTP + H2O = GDP + phosphate + H(+). In terms of biological role, tubulin is the major constituent of microtubules, a cylinder consisting of laterally associated linear protofilaments composed of alpha- and beta-tubulin heterodimers. Microtubules grow by the addition of GTP-tubulin dimers to the microtubule end, where a stabilizing cap forms. Below the cap, tubulin dimers are in GDP-bound state, owing to GTPase activity of alpha-tubulin. The chain is Tubulin alpha chain from Trypanosoma cruzi.